The primary structure comprises 236 residues: Uridylate kinase (236 aa).

10–13 contacts ATP; sequence KLSG. G52 is a UMP binding site. ATP-binding residues include G53 and R57. UMP is bound by residues D72 and 133-140; that span reads TGNPFFTT. ATP contacts are provided by T160, Y166, and D169.

Belongs to the UMP kinase family. As to quaternary structure, homohexamer.

The protein resides in the cytoplasm. It carries out the reaction UMP + ATP = UDP + ADP. It functions in the pathway pyrimidine metabolism; CTP biosynthesis via de novo pathway; UDP from UMP (UMPK route): step 1/1. Inhibited by UTP. Functionally, catalyzes the reversible phosphorylation of UMP to UDP. The polypeptide is Uridylate kinase (Bacteroides fragilis (strain ATCC 25285 / DSM 2151 / CCUG 4856 / JCM 11019 / LMG 10263 / NCTC 9343 / Onslow / VPI 2553 / EN-2)).